Here is a 341-residue protein sequence, read N- to C-terminus: Elongation factor Ts, mitochondrial 2 (341 aa).

A mitochondrion-targeting transit peptide spans 1–17; sequence MLAARFASRAFPRTRLY.

The protein belongs to the EF-Ts family.

Its subcellular location is the mitochondrion. Associates with the EF-Tu.GDP complex and induces the exchange of GDP to GTP. It remains bound to the aminoacyl-tRNA.EF-Tu.GTP complex up to the GTP hydrolysis stage on the ribosome. In Postia placenta (strain ATCC 44394 / Madison 698-R) (Brown rot fungus), this protein is Elongation factor Ts, mitochondrial 2.